Consider the following 78-residue polypeptide: Acyl carrier protein (78 aa).

Residues 2–77 (SNIEQQVKKI…LAIDYINAHN (76 aa)) enclose the Carrier domain. Residue S37 is modified to O-(pantetheine 4'-phosphoryl)serine.

The protein belongs to the acyl carrier protein (ACP) family. In terms of processing, 4'-phosphopantetheine is transferred from CoA to a specific serine of apo-ACP by AcpS. This modification is essential for activity because fatty acids are bound in thioester linkage to the sulfhydryl of the prosthetic group.

The protein resides in the cytoplasm. It functions in the pathway lipid metabolism; fatty acid biosynthesis. Its function is as follows. Carrier of the growing fatty acid chain in fatty acid biosynthesis. The protein is Acyl carrier protein of Neisseria gonorrhoeae (strain ATCC 700825 / FA 1090).